We begin with the raw amino-acid sequence, 459 residues long: MSRLWGGRFRKETDPLVEEFHSSLSFDRRLYAYDIRGSIAHARMLGRVGIISAEEARTLEAGLYAVLDDFNAGRVAFSPEDEDIHSLVERLLIARVGEVGKKLHTARSRNDQVALDVRMYLKDEIDAVRELLAELQHTLLDLAERHIETLLPGYTHLQRAQPVTLAHHLLAYVEMFHRDAERLADCRRRTDVLPLGAGALAGTVFPIDREYTAAELGFAALAENSLDAVSDRDFAVEFCAAAALIMVHLSRFCEELVLWSTAEFGFAEMDDAFATGSSMMPQKKNPDMAELIRGKSGRVFGDLQALLAMLKGLPLAYNKDMQEDKEALFDAVDTVKKCLMVFTAMIGTVSFREQAMDRAVRGGFTNATDLADYLAGRGVPFREAHEIVGEIVLYALETGKTLEELTLEEYRRFSAAVGEDVYAAIRVEHCLAARKVHGGPAPETVRAAIARARKRLERV.

The protein belongs to the lyase 1 family. Argininosuccinate lyase subfamily.

The protein localises to the cytoplasm. It carries out the reaction 2-(N(omega)-L-arginino)succinate = fumarate + L-arginine. Its pathway is amino-acid biosynthesis; L-arginine biosynthesis; L-arginine from L-ornithine and carbamoyl phosphate: step 3/3. This is Argininosuccinate lyase from Desulforudis audaxviator (strain MP104C).